The following is a 222-amino-acid chain: Gamma-glutamylcyclotransferase and putative RNase MJ0434 (222 aa).

Arg-75 is an active-site residue. The short motif at 75 to 82 (RDILIRKY) is the RX(4)HXY motif element. Position 82 is an O-di-AMP-tyrosine (Tyr-82).

In the N-terminal section; belongs to the HepT RNase toxin family. The protein in the C-terminal section; belongs to the gamma-glutamylcyclotransferase family. In terms of assembly, homodimer, probably forms a complex with cognate antitoxin MJ0435. Post-translationally, modified by cognate antitoxin MJ0435; probably at least 2 successive AMPylation events occur on Tyr-82.

Functionally, probable toxic component of a putative type VII toxin-antitoxin (TA) system, probably an RNase. Probably neutralized by cognate antitoxin MJ0435. Neutralization may be due to AMPylation by MJ0435. This is Gamma-glutamylcyclotransferase and putative RNase MJ0434 from Methanocaldococcus jannaschii (strain ATCC 43067 / DSM 2661 / JAL-1 / JCM 10045 / NBRC 100440) (Methanococcus jannaschii).